A 334-amino-acid chain; its full sequence is Cathepsin L2 (334 aa).

The first 17 residues, methionine 1–alanine 17, serve as a signal peptide directing secretion. The propeptide at valine 18–aspartate 113 is activation peptide. Cystine bridges form between cysteine 135-cysteine 178 and cysteine 169-cysteine 211. Cysteine 138 is an active-site residue. An N-linked (GlcNAc...) asparagine glycan is attached at asparagine 221. A disulfide bridge connects residues cysteine 270 and cysteine 323. Residue histidine 277 is part of the active site. Asparagine 292 carries an N-linked (GlcNAc...) asparagine glycan. The active site involves asparagine 301.

The protein belongs to the peptidase C1 family. Predominantly expressed in the thymus and testis. Also expressed in corneal epithelium, and to a lesser extent in conjunctival epithelium and skin.

The protein resides in the lysosome. It carries out the reaction The recombinant enzyme hydrolyzes proteins (serum albumin, collagen) and synthetic substrates (Z-Phe-Arg-NHMec &gt; Z-Leu-Arg-NHMec &gt; Z-Val-Arg-NHMec).. Inhibited by CST6. Functionally, cysteine protease. May have an important role in corneal physiology. This chain is Cathepsin L2 (CTSV), found in Homo sapiens (Human).